We begin with the raw amino-acid sequence, 211 residues long: Phosphoribosyl-dephospho-CoA transferase (211 aa).

Residues Asp136 and Asp138 contribute to the active site.

The protein belongs to the MdcG family.

It carries out the reaction apo-[malonate decarboxylase ACP] + 2'-(5''-triphospho-alpha-D-ribosyl)-3'-dephospho-CoA = holo-[malonate decarboxylase ACP] + diphosphate. Functionally, transfers 2'-(5-triphosphoribosyl)-3'-dephosphocoenzyme-A to the apo-[acyl-carrier-protein] of the malonate decarboxylase to yield holo-[acyl-carrier-protein]. This Pseudomonas syringae pv. tomato (strain ATCC BAA-871 / DC3000) protein is Phosphoribosyl-dephospho-CoA transferase.